A 982-amino-acid polypeptide reads, in one-letter code: Ubiquitin carboxyl-terminal hydrolase 15 (982 aa).

Positions 7 to 118 constitute a DUSP domain; sequence VDLETQRSEV…SQQPIARKVV (112 aa). Positions 288 to 933 constitute a USP domain; the sequence is CGLSNLGNTC…AAYVLFYQRQ (646 aa). Cys297 (nucleophile) is an active-site residue. The segment at 623-695 is disordered; sequence TEENDGSLHC…DNDSENGLCT (73 aa). The segment covering 655 to 672 has biased composition (acidic residues); the sequence is METDEPDDESSQDQELPS. His891 (proton acceptor) is an active-site residue. The segment at 950-982 is disordered; it reads QGASAATGAPHESDEESNEDENDIENENCMHTN. Acidic residues predominate over residues 962-975; sequence SDEESNEDENDIEN.

It belongs to the peptidase C19 family.

It is found in the cytoplasm. Its subcellular location is the nucleus. It carries out the reaction Thiol-dependent hydrolysis of ester, thioester, amide, peptide and isopeptide bonds formed by the C-terminal Gly of ubiquitin (a 76-residue protein attached to proteins as an intracellular targeting signal).. In terms of biological role, hydrolase that removes conjugated ubiquitin from target proteins and regulates various pathways such as the TGF-beta receptor signaling and NF-kappa-B pathways. Acts as a key regulator of TGF-beta receptor signaling pathway, but the precise mechanism is still unclear: according to a report, acts by promoting deubiquitination of monoubiquitinated R-SMADs, thereby alleviating inhibition of R-SMADs and promoting activation of TGF-beta target genes. According to another reports, regulates the TGF-beta receptor signaling pathway by mediating deubiquitination and stabilization of tgfbr1, leading to an enhanced TGF-beta signal. May also regulate gene expression and/or DNA repair through the deubiquitination of histone H2B. Involved in endosome organization by mediating deubiquitination of rnf26 target(s), releasing vesicles that are restrained in the perinuclear region. The protein is Ubiquitin carboxyl-terminal hydrolase 15 (usp15) of Xenopus tropicalis (Western clawed frog).